Reading from the N-terminus, the 435-residue chain is Manganese transport system membrane protein MntC (435 aa).

9 helical membrane-spanning segments follow: residues 17-37 (VLAG…FVLL), 42-62 (LIGD…FLFT), 68-88 (PFFL…IQLI), 98-118 (SAIG…LTYI), 143-163 (QDII…IVFF), 166-186 (FTLI…VRFL), 189-209 (LLAC…GVIL), 228-248 (LTGM…AGTL), and 255-275 (GMAT…FSMI).

The protein belongs to the ABC-3 integral membrane protein family. As to quaternary structure, the complex is probably composed of two ATP-binding proteins (MntB), two transmembrane proteins (MntC and MntD) and a solute-binding protein (MntA).

The protein localises to the cell membrane. Functionally, probably part of the ABC transporter complex MntABCD involved in manganese import. Probably responsible for the translocation of the substrate across the membrane. In Bacillus subtilis (strain 168), this protein is Manganese transport system membrane protein MntC.